Here is a 476-residue protein sequence, read N- to C-terminus: Bifunctional protein HldE (476 aa).

Residues 1–318 (MAQYSAEFKQ…ENAIHARPET (318 aa)) are ribokinase. Residue 195-198 (NMSE) participates in ATP binding. Asp264 is a catalytic residue. Positions 344-476 (MTNGCFDILH…VIEKIKLLKD (133 aa)) are cytidylyltransferase.

It in the N-terminal section; belongs to the carbohydrate kinase PfkB family. The protein in the C-terminal section; belongs to the cytidylyltransferase family. In terms of assembly, homodimer.

The catalysed reaction is D-glycero-beta-D-manno-heptose 7-phosphate + ATP = D-glycero-beta-D-manno-heptose 1,7-bisphosphate + ADP + H(+). It catalyses the reaction D-glycero-beta-D-manno-heptose 1-phosphate + ATP + H(+) = ADP-D-glycero-beta-D-manno-heptose + diphosphate. It participates in nucleotide-sugar biosynthesis; ADP-L-glycero-beta-D-manno-heptose biosynthesis; ADP-L-glycero-beta-D-manno-heptose from D-glycero-beta-D-manno-heptose 7-phosphate: step 1/4. Its pathway is nucleotide-sugar biosynthesis; ADP-L-glycero-beta-D-manno-heptose biosynthesis; ADP-L-glycero-beta-D-manno-heptose from D-glycero-beta-D-manno-heptose 7-phosphate: step 3/4. It functions in the pathway bacterial outer membrane biogenesis; LOS core biosynthesis. Catalyzes the phosphorylation of D-glycero-D-manno-heptose 7-phosphate at the C-1 position to selectively form D-glycero-beta-D-manno-heptose-1,7-bisphosphate. Its function is as follows. Catalyzes the ADP transfer from ATP to D-glycero-beta-D-manno-heptose 1-phosphate, yielding ADP-D-glycero-beta-D-manno-heptose. This chain is Bifunctional protein HldE, found in Haemophilus influenzae (strain ATCC 51907 / DSM 11121 / KW20 / Rd).